The following is a 575-amino-acid chain: Developmental and secondary metabolism regulator VEL1 (575 aa).

Residues 21–225 form the Velvet domain; it reads GRKLKYTLTV…AEQGCRVRIR (205 aa). The Nuclear localization signal motif lies at 35–40; that stretch reads ERARAC. Disordered regions lie at residues 36–56 and 227–402; these read RARA…VDPP and DVRM…QSYE. Basic and acidic residues predominate over residues 274–284; it reads VHEDPQQRRGS. Positions 294–308 are enriched in polar residues; the sequence is VVNTPFRTPSISPST. Pro residues predominate over residues 334–346; the sequence is IQPPHPPPPPPSS. 2 stretches are compositionally biased toward polar residues: residues 355–365 and 385–402; these read HHNQGPSTQFR and SYSQ…QSYE. The segment at 465–509 is PEST; the sequence is AEQPLAMSPLASVTSISRGTQNSAPMPSHNYNKLERSGSYSQYAP. Positions 513–549 are disordered; that stretch reads EAPKSTNKRSFNDVFSTPTESLSNGRRPSAIGIDIEE. Positions 516–538 are enriched in polar residues; sequence KSTNKRSFNDVFSTPTESLSNGR.

It belongs to the velvet family. VeA subfamily. As to quaternary structure, component of the heterotrimeric velvet complex composed of LAE1, VEL1 and VEL2; VEL1 acting as a bridging protein between LAE1 and VEL2.

Its subcellular location is the nucleus. The protein resides in the cytoplasm. Component of the velvet transcription factor complex that controls sexual/asexual developmental ratio in response to light, promoting sexual development in the darkness while stimulating asexual sporulation under illumination. The velvet complex hat acts as a global regulator for secondary metabolite gene expression. Controls the expression of the oxalic acid and melanin gene clusters. Also controls the expression of proteases and carbohydrate-active enzymes. Involved in the resistance to oxidative stress. Required for full virulence. In Botryotinia fuckeliana (strain B05.10) (Noble rot fungus), this protein is Developmental and secondary metabolism regulator VEL1.